A 298-amino-acid chain; its full sequence is uncharacterized protein (298 aa).

This sequence to M.tuberculosis Rv1486c, M.bovis Mb1522c and M.avium MAV321.

This is an uncharacterized protein from Mycobacterium leprae (strain TN).